The following is a 284-amino-acid chain: Pantothenate synthetase (284 aa).

An ATP-binding site is contributed by 32-39 (MGALHDGH). Residue H39 is the Proton donor of the active site. Q63 lines the (R)-pantoate pocket. Q63 serves as a coordination point for beta-alanine. 149 to 152 (GEKD) serves as a coordination point for ATP. Residue Q155 participates in (R)-pantoate binding. ATP contacts are provided by residues I178 and 186-189 (MSSR).

The protein belongs to the pantothenate synthetase family. Homodimer.

Its subcellular location is the cytoplasm. The catalysed reaction is (R)-pantoate + beta-alanine + ATP = (R)-pantothenate + AMP + diphosphate + H(+). It participates in cofactor biosynthesis; (R)-pantothenate biosynthesis; (R)-pantothenate from (R)-pantoate and beta-alanine: step 1/1. Catalyzes the condensation of pantoate with beta-alanine in an ATP-dependent reaction via a pantoyl-adenylate intermediate. The chain is Pantothenate synthetase from Roseobacter denitrificans (strain ATCC 33942 / OCh 114) (Erythrobacter sp. (strain OCh 114)).